Here is a 518-residue protein sequence, read N- to C-terminus: Efflux pump terJ (518 aa).

A helical transmembrane segment spans residues I43–V63. N-linked (GlcNAc...) asparagine glycosylation is present at N79. Transmembrane regions (helical) follow at residues Q82 to G102, L112 to E132, G135 to P155, A177 to A197, W204 to V224, I244 to A264, P272 to E292, F311 to W331, G339 to A359, G364 to C384, W400 to A420, and S439 to V459. N-linked (GlcNAc...) asparagine glycosylation occurs at N466. Residues A477–L497 form a helical membrane-spanning segment.

The protein belongs to the major facilitator superfamily.

The protein localises to the cell membrane. Functionally, efflux pump that might be required for efficient secretion of terrein or other secondary metabolies produced by the terrein genne cluster. The sequence is that of Efflux pump terJ from Aspergillus terreus (strain NIH 2624 / FGSC A1156).